A 299-amino-acid polypeptide reads, in one-letter code: Peroxisomal biogenesis factor 19 (299 aa).

A disordered region spans residues 1 to 63; sequence MAAAEGDGGV…SPGDTAKDAL (63 aa). An N-acetylalanine modification is found at Ala2. Positions 2–56 are docking to the peroxisome membrane and binding to PEX3; the sequence is AAAEGDGGVRAEADRELEELLESALDDFDKAKPSPAPPPTTTAPDASGPQKRSPG. Residues 2–91 form a necessary for PEX19 function on peroxisome biogenesis region; sequence AAAEGDGGVR…QATAEFEKAM (90 aa). Acidic residues predominate over residues 16–27; that stretch reads RELEELLESALD. 3 positions are modified to phosphoserine: Ser35, Ser54, and Ser66. Thr236 carries the post-translational modification Phosphothreonine. Cysteine methyl ester is present on Cys296. A lipid anchor (S-farnesyl cysteine) is attached at Cys296. Residues 297–299 constitute a propeptide, removed in mature form; that stretch reads LIM.

The protein belongs to the peroxin-19 family. As to quaternary structure, interacts with a broad range of peroxisomal membrane proteins, including PEX3, PEX10, PEX11A, PEX11B, PEX12, PEX13, PEX14 and PEX16, PXMP2/PMP22, PXMP4/PMP24, SLC25A17/PMP34, ABCD1/ALDP, ABCD2/ALDRP, and ABCD3/PMP70. Also interacts with the tumor suppressor CDKN2A/p19ARF.

The protein localises to the cytoplasm. It is found in the peroxisome membrane. In terms of biological role, necessary for early peroxisomal biogenesis. Acts both as a cytosolic chaperone and as an import receptor for peroxisomal membrane proteins (PMPs). Binds and stabilizes newly synthesized PMPs in the cytoplasm by interacting with their hydrophobic membrane-spanning domains, and targets them to the peroxisome membrane by binding to the integral membrane protein PEX3. Excludes CDKN2A from the nucleus and prevents its interaction with MDM2, which results in active degradation of TP53. This Bos taurus (Bovine) protein is Peroxisomal biogenesis factor 19 (PEX19).